The following is a 680-amino-acid chain: MASTVGLAPGLSRKLKKVLDCRTDSPDLVASLNALSSFYDENSAHARRNLRSTIEKRALQINSEFLNAADSTQIALDRVEEEVNALADCCDKIAAALSSSAATTSDIISTTERLKQELEVTTQRQEIVNCFLRDYQLSNEEIKALREDELNENFFQALSHVQEIHSNCKLLLRTHHQRAGLELMDMMAVYQEGAYERLCRWVQAECRKLGDTDNPEVSELLRTAVRCLKERPVLFKYCAEEVGNLRHNALFRRFISALTRGGPGGMPRPIEVHAHDPLRYVGDMLGWLHQALASERELVHALFDIDSADHQSNAKNTSENIALKAGESDFTFVLDRIFEGVCRPFKVRVEQVLQSQPSLIISYKLTNTLEFYSYTISDLLGRDTALCNTIGMVKDAAQKTFFDILKTRGEKLLRYPPPVAVDLSPPPAVREGVSLTLEIIENYNSMMVSASGEKPAFDPVLSALLDPIIKMCEQAAEAHKSKKSGQLPRRSRTSSDSSQLTSVDALLSSSPSPPQNNETPSKIFLINCLCAIQQPLLRHDVASQYVTNIGLMIENHINLLVQNEVDTLLHKCGLSDKMQIFRSSTSELPLSERQDTSPAMLSECLKAFFGLVLGSEGSLPEFEQIQVPKLRSEACVRVAKTLAEAYEVIYQAVTDQQNGYPDPKSLARHPPDQIRTILGI.

The interval 479-517 is disordered; the sequence is HKSKKSGQLPRRSRTSSDSSQLTSVDALLSSSPSPPQNN.

The protein belongs to the COG6 family. In terms of assembly, component of the conserved oligomeric Golgi complex which is composed of eight different subunits and is required for normal Golgi morphology and localization. Interacts with COG5, COG7 and COG8.

The protein localises to the golgi apparatus membrane. Required for normal Golgi function. The chain is Conserved oligomeric Golgi complex subunit 6 from Arabidopsis thaliana (Mouse-ear cress).